A 160-amino-acid chain; its full sequence is Conopressin/conophysin, isoform 2 (160 aa).

Residues 1–30 form the signal peptide; the sequence is MKCSVLQMSRLSWAMCLMLLMLLLLGTAQG. Residues Cys31 and Cys36 are joined by a disulfide bond. Gly39 carries the glycine amide modification. Residues 40–47 constitute a propeptide that is removed on maturation; sequence GKRAVDAL. Disulfide bonds link Cys53-Cys97, Cys56-Cys70, Cys64-Cys87, Cys71-Cys77, Cys104-Cys118, Cys112-Cys130, and Cys119-Cys124.

The protein belongs to the vasopressin/oxytocin family. As to expression, expressed by the venom gland.

The protein resides in the secreted. Functionally, targets vasopressin-oxytocin related receptors. This chain is Conopressin/conophysin, isoform 2, found in Conus monile (Necklace cone).